Here is a 176-residue protein sequence, read N- to C-terminus: DNA repair RAD52-like protein 1, mitochondrial (176 aa).

Residues 1-37 (MAGLGLRLKAAKWTLRSGSGAVSREWSSEMGKGVRRF) constitute a mitochondrion transit peptide.

This sequence belongs to the RAD52 family. As to quaternary structure, interacts with WHY2. Expressed in root vascular tissue, tips of primary and secondary roots, young leaves, hydathodes, stomatal guard cells, cauline leaves, flower buds, stipules, carpels, pistils and anther filaments.

The protein resides in the mitochondrion. It localises to the nucleus. Functionally, plant-specific single-stranded DNA-binding protein required for efficient heterologous recombination-dependent DNA repair in nuclear and mitochondrial compartments. Forms large nucleo-protein complexes with WHY2 in mitochondria. Binds ssDNA with high affinity, but with little sequence specificity. Involved in double-stranded DNA break repair. Involved in the hydrolytic splicing pathway in mitochondrion. Facilitates the excision of two cis-spliced group II introns, NAD1 intron 2 and NAD2 intron 1. This Arabidopsis thaliana (Mouse-ear cress) protein is DNA repair RAD52-like protein 1, mitochondrial.